The chain runs to 662 residues: Mitochondrial Rho GTPase 1 (662 aa).

The Cytoplasmic segment spans residues 1 to 634 (MTKETIRVVI…AKDVDYRQTA (634 aa)). Residues 3–185 (KETIRVVICG…FYLCQRAITH (183 aa)) form the Miro 1 domain. GTP contacts are provided by residues 12–19 (GDEGVGKS), 62–64 (DTS), and 116–119 (NKCD). 2 consecutive EF-hand domains span residues 201-236 (LAVM…CFNK) and 330-365 (KGYR…TPGL). Ca(2+) is bound by residues D214, N216, D218, Y220, E225, D343, D345, D347, and E354. The Miro 2 domain occupies 446–611 (RKVFNCFVIG…FIKITEAALD (166 aa)). GTP contacts are provided by residues 455–462 (GKPCCGKS), 491–495 (ELKGG), and 560–563 (SKAD). The chain crosses the membrane as a helical; Anchor for type IV membrane protein span at residues 635-655 (LIFGSTVGFVALCSFTLMKLF). Over 656-662 (KSSKFSK) the chain is Mitochondrial intermembrane.

This sequence belongs to the mitochondrial Rho GTPase family.

It is found in the mitochondrion outer membrane. In terms of biological role, mitochondrial GTPase involved in mitochondrial trafficking. Probably involved in control of anterograde transport of mitochondria and their subcellular distribution. The chain is Mitochondrial Rho GTPase 1 (GEM1) from Saccharomyces cerevisiae (strain ATCC 204508 / S288c) (Baker's yeast).